Consider the following 249-residue polypeptide: Purine nucleoside phosphorylase ML0918 (249 aa).

Positions 72, 109, and 126 each coordinate Zn(2+).

This sequence belongs to the purine nucleoside phosphorylase YfiH/LACC1 family. Homodimer. Cu(2+) serves as cofactor. Zn(2+) is required as a cofactor.

The enzyme catalyses adenosine + phosphate = alpha-D-ribose 1-phosphate + adenine. It carries out the reaction S-methyl-5'-thioadenosine + phosphate = 5-(methylsulfanyl)-alpha-D-ribose 1-phosphate + adenine. It catalyses the reaction inosine + phosphate = alpha-D-ribose 1-phosphate + hypoxanthine. The catalysed reaction is adenosine + H2O + H(+) = inosine + NH4(+). In terms of biological role, purine nucleoside enzyme that catalyzes the phosphorolysis of adenosine and inosine nucleosides, yielding D-ribose 1-phosphate and the respective free bases, adenine and hypoxanthine. Also catalyzes the phosphorolysis of S-methyl-5'-thioadenosine into adenine and S-methyl-5-thio-alpha-D-ribose 1-phosphate. Also has adenosine deaminase activity. In Mycobacterium leprae (strain TN), this protein is Purine nucleoside phosphorylase ML0918.